A 210-amino-acid polypeptide reads, in one-letter code: MADS-box protein AeAP3-2 (210 aa).

Residues 1-36 enclose the MADS-box domain; the sequence is GGLLKKARELAILCDAQLGVIIFSSSGKMFEFSSPP. Positions 59 to 149 constitute a K-box domain; the sequence is NQQVYCEITR…YRVIQDHHAA (91 aa).

As to expression, expressed exclusively in the carpel.

Its subcellular location is the nucleus. In terms of biological role, probable transcription factor. The chain is MADS-box protein AeAP3-2 (AP3-2) from Asarum europaeum (Asarabacca).